Reading from the N-terminus, the 295-residue chain is tRNA-cytidine(32) 2-sulfurtransferase (295 aa).

Residues 63-68 (SGGKDS) carry the PP-loop motif motif. [4Fe-4S] cluster contacts are provided by Cys138, Cys141, and Cys229.

This sequence belongs to the TtcA family. In terms of assembly, homodimer. Requires Mg(2+) as cofactor. [4Fe-4S] cluster is required as a cofactor.

It localises to the cytoplasm. The enzyme catalyses cytidine(32) in tRNA + S-sulfanyl-L-cysteinyl-[cysteine desulfurase] + AH2 + ATP = 2-thiocytidine(32) in tRNA + L-cysteinyl-[cysteine desulfurase] + A + AMP + diphosphate + H(+). It functions in the pathway tRNA modification. Functionally, catalyzes the ATP-dependent 2-thiolation of cytidine in position 32 of tRNA, to form 2-thiocytidine (s(2)C32). The sulfur atoms are provided by the cysteine/cysteine desulfurase (IscS) system. The protein is tRNA-cytidine(32) 2-sulfurtransferase of Hyphomonas neptunium (strain ATCC 15444).